Consider the following 87-residue polypeptide: Protein L (87 aa).

Functionally, this protein inhibits the multiplication of double-stranded DNA phages, such as P1 and lambda. The chain is Protein L (L) from Escherichia coli.